We begin with the raw amino-acid sequence, 217 residues long: Thiamine-phosphate synthase (217 aa).

Residues 45-49 (QFRQK) and N81 contribute to the 4-amino-2-methyl-5-(diphosphooxymethyl)pyrimidine site. Residues D82 and D101 each coordinate Mg(2+). Residue S120 participates in 4-amino-2-methyl-5-(diphosphooxymethyl)pyrimidine binding. 147–149 (TPS) lines the 2-[(2R,5Z)-2-carboxy-4-methylthiazol-5(2H)-ylidene]ethyl phosphate pocket. 4-amino-2-methyl-5-(diphosphooxymethyl)pyrimidine is bound at residue K150. Residues G179 and 197–198 (IS) contribute to the 2-[(2R,5Z)-2-carboxy-4-methylthiazol-5(2H)-ylidene]ethyl phosphate site.

Belongs to the thiamine-phosphate synthase family. Mg(2+) is required as a cofactor.

The enzyme catalyses 2-[(2R,5Z)-2-carboxy-4-methylthiazol-5(2H)-ylidene]ethyl phosphate + 4-amino-2-methyl-5-(diphosphooxymethyl)pyrimidine + 2 H(+) = thiamine phosphate + CO2 + diphosphate. It catalyses the reaction 2-(2-carboxy-4-methylthiazol-5-yl)ethyl phosphate + 4-amino-2-methyl-5-(diphosphooxymethyl)pyrimidine + 2 H(+) = thiamine phosphate + CO2 + diphosphate. The catalysed reaction is 4-methyl-5-(2-phosphooxyethyl)-thiazole + 4-amino-2-methyl-5-(diphosphooxymethyl)pyrimidine + H(+) = thiamine phosphate + diphosphate. It participates in cofactor biosynthesis; thiamine diphosphate biosynthesis; thiamine phosphate from 4-amino-2-methyl-5-diphosphomethylpyrimidine and 4-methyl-5-(2-phosphoethyl)-thiazole: step 1/1. Functionally, condenses 4-methyl-5-(beta-hydroxyethyl)thiazole monophosphate (THZ-P) and 2-methyl-4-amino-5-hydroxymethyl pyrimidine pyrophosphate (HMP-PP) to form thiamine monophosphate (TMP). In Helicobacter pylori (strain J99 / ATCC 700824) (Campylobacter pylori J99), this protein is Thiamine-phosphate synthase.